A 625-amino-acid chain; its full sequence is Dual specificity protein phosphatase 8 (625 aa).

Residues 23–138 (GPGGPLVIDS…FSSCFPGLCE (116 aa)) form the Rhodanese domain. In terms of domain architecture, Tyrosine-protein phosphatase spans 160–302 (GLTRILPHLY…LLEYERSLKL (143 aa)). Cys246 functions as the Phosphocysteine intermediate in the catalytic mechanism. The tract at residues 306 to 586 (LQGDPGTPSG…PAPETQFKRR (281 aa)) is disordered. The segment covering 380–389 (SSDRLQDTNR) has biased composition (basic and acidic residues). A compositionally biased stretch (low complexity) spans 431–448 (AALGLSSPSPDSPDAAPE). Residues 555 to 570 (DLRRREAARAEPRDAR) show a composition bias toward basic and acidic residues.

Belongs to the protein-tyrosine phosphatase family. Non-receptor class dual specificity subfamily. Monomer. In terms of tissue distribution, abundant in brain, heart and skeletal muscle.

It is found in the cytoplasm. The protein localises to the nucleus. The catalysed reaction is O-phospho-L-tyrosyl-[protein] + H2O = L-tyrosyl-[protein] + phosphate. The enzyme catalyses O-phospho-L-seryl-[protein] + H2O = L-seryl-[protein] + phosphate. It catalyses the reaction O-phospho-L-threonyl-[protein] + H2O = L-threonyl-[protein] + phosphate. Has phosphatase activity with synthetic phosphatase substrates and negatively regulates mitogen-activated protein kinase activity, presumably by catalysing their dephosphorylation. Expected to display protein phosphatase activity toward phosphotyrosine, phosphoserine and phosphothreonine residues. In Homo sapiens (Human), this protein is Dual specificity protein phosphatase 8 (DUSP8).